A 179-amino-acid chain; its full sequence is Acireductone dioxygenase (179 aa).

A disordered region spans residues 1-23; the sequence is MVQAWYMDESTADPRMPHRAQPD. Fe(2+)-binding residues include His-88, His-90, Glu-94, and His-133. Residues His-88, His-90, Glu-94, and His-133 each coordinate Ni(2+).

This sequence belongs to the acireductone dioxygenase (ARD) family. As to quaternary structure, monomer. Interacts with MMP14. It depends on Fe(2+) as a cofactor. Ni(2+) is required as a cofactor. In terms of tissue distribution, detected in prostate, liver, heart, brain, muscle, kidney and seminal vesicles.

It is found in the cytoplasm. The protein localises to the nucleus. It localises to the cell membrane. The enzyme catalyses 1,2-dihydroxy-5-(methylsulfanyl)pent-1-en-3-one + O2 = 4-methylsulfanyl-2-oxobutanoate + formate + 2 H(+). It catalyses the reaction 1,2-dihydroxy-5-(methylsulfanyl)pent-1-en-3-one + O2 = 3-(methylsulfanyl)propanoate + CO + formate + 2 H(+). Its pathway is amino-acid biosynthesis; L-methionine biosynthesis via salvage pathway; L-methionine from S-methyl-5-thio-alpha-D-ribose 1-phosphate: step 5/6. Functionally, catalyzes 2 different reactions between oxygen and the acireductone 1,2-dihydroxy-3-keto-5-methylthiopentene (DHK-MTPene) depending upon the metal bound in the active site. Fe-containing acireductone dioxygenase (Fe-ARD) produces formate and 2-keto-4-methylthiobutyrate (KMTB), the alpha-ketoacid precursor of methionine in the methionine recycle pathway. Ni-containing acireductone dioxygenase (Ni-ARD) produces methylthiopropionate, carbon monoxide and formate, and does not lie on the methionine recycle pathway. Also down-regulates cell migration mediated by MMP14. This Rattus norvegicus (Rat) protein is Acireductone dioxygenase (Adi1).